The primary structure comprises 217 residues: Elongation factor Ts (217 aa).

The involved in Mg(2+) ion dislocation from EF-Tu stretch occupies residues 82-85 (TDFV).

It belongs to the EF-Ts family.

The protein resides in the cytoplasm. In terms of biological role, associates with the EF-Tu.GDP complex and induces the exchange of GDP to GTP. It remains bound to the aminoacyl-tRNA.EF-Tu.GTP complex up to the GTP hydrolysis stage on the ribosome. This chain is Elongation factor Ts, found in Desulforamulus reducens (strain ATCC BAA-1160 / DSM 100696 / MI-1) (Desulfotomaculum reducens).